Here is a 341-residue protein sequence, read N- to C-terminus: Phosphoribosylformylglycinamidine cyclo-ligase (341 aa).

Belongs to the AIR synthase family.

The protein resides in the cytoplasm. It carries out the reaction 2-formamido-N(1)-(5-O-phospho-beta-D-ribosyl)acetamidine + ATP = 5-amino-1-(5-phospho-beta-D-ribosyl)imidazole + ADP + phosphate + H(+). Its pathway is purine metabolism; IMP biosynthesis via de novo pathway; 5-amino-1-(5-phospho-D-ribosyl)imidazole from N(2)-formyl-N(1)-(5-phospho-D-ribosyl)glycinamide: step 2/2. The protein is Phosphoribosylformylglycinamidine cyclo-ligase of Agathobacter rectalis (strain ATCC 33656 / DSM 3377 / JCM 17463 / KCTC 5835 / VPI 0990) (Eubacterium rectale).